Here is a 146-residue protein sequence, read N- to C-terminus: MESPGPGGPPLVQAPYTVLLLPLGTSRQDPGAQNFFLWLQMMQALEREQDALWQGLELLEHGQAWFADRLRETQQRQLQLGALGEDFLMDLHSETDAPLLTRIQKVNACLHSLIHKELSKHRKGVTQSTGEVVSQAPPGPKGPTLV.

The disordered stretch occupies residues 121–146 (HRKGVTQSTGEVVSQAPPGPKGPTLV). Positions 137 to 146 (PPGPKGPTLV) are enriched in pro residues.

In Mus musculus (Mouse), this protein is Suppressor APC domain-containing protein 1 (Sapcd1).